A 571-amino-acid polypeptide reads, in one-letter code: Septation ring formation regulator EzrA (571 aa).

Residues methionine 1–tyrosine 3 are Extracellular-facing. A helical transmembrane segment spans residues methionine 4–leucine 22. Residues lysine 23–glutamate 571 are Cytoplasmic-facing. Coiled coils occupy residues valine 169–glutamate 214, alanine 249–glutamate 298, aspartate 326–glutamate 374, lysine 400–leucine 438, and threonine 474–phenylalanine 529.

Belongs to the EzrA family.

It is found in the cell membrane. Functionally, negative regulator of FtsZ ring formation; modulates the frequency and position of FtsZ ring formation. Inhibits FtsZ ring formation at polar sites. Interacts either with FtsZ or with one of its binding partners to promote depolymerization. This is Septation ring formation regulator EzrA from Listeria welshimeri serovar 6b (strain ATCC 35897 / DSM 20650 / CCUG 15529 / CIP 8149 / NCTC 11857 / SLCC 5334 / V8).